Here is an 810-residue protein sequence, read N- to C-terminus: Hemoglobin-haptoglobin utilization protein B (810 aa).

An N-terminal signal peptide occupies residues Met1–Ala22. The TBDR plug domain maps to Asn34–Lys166. A TBDR beta-barrel domain is found at Asp175–Phe810. The short motif at Gln793–Phe810 is the TonB C-terminal box element.

This sequence belongs to the TonB-dependent receptor family.

It is found in the cell outer membrane. In terms of biological role, acts as a receptor for hemoglobin or the hemoglobin/haptoglobin complex and is required for heme uptake. In Neisseria meningitidis serogroup C, this protein is Hemoglobin-haptoglobin utilization protein B (hpuB).